The sequence spans 283 residues: Digeranylgeranylglyceryl phosphate synthase (283 aa).

8 consecutive transmembrane segments (helical) span residues 21–41, 45–65, 97–117, 135–155, 158–178, 204–224, 226–246, and 261–281; these read ITASIGGIIGYLISSNFEIDI, LLVFFVVFFVCAYGNVINDIF, LILGLVLSLFINIYALIIAVI, IGNFIIGYLTGSVFLFGGVAG, VMPVVILFLCSLLSIWGREIV, LYFATFLVVLAVILSPLPYIL, IFGIWYLILIAICDILFIYAM, and VSKFLKIIMNIVLLAFIVGAI.

It belongs to the UbiA prenyltransferase family. DGGGP synthase subfamily. Mg(2+) is required as a cofactor.

The protein resides in the cell membrane. It carries out the reaction sn-3-O-(geranylgeranyl)glycerol 1-phosphate + (2E,6E,10E)-geranylgeranyl diphosphate = 2,3-bis-O-(geranylgeranyl)-sn-glycerol 1-phosphate + diphosphate. It participates in membrane lipid metabolism; glycerophospholipid metabolism. Its function is as follows. Prenyltransferase that catalyzes the transfer of the geranylgeranyl moiety of geranylgeranyl diphosphate (GGPP) to the C2 hydroxyl of (S)-3-O-geranylgeranylglyceryl phosphate (GGGP). This reaction is the second ether-bond-formation step in the biosynthesis of archaeal membrane lipids. The protein is Digeranylgeranylglyceryl phosphate synthase of Methanocaldococcus jannaschii (strain ATCC 43067 / DSM 2661 / JAL-1 / JCM 10045 / NBRC 100440) (Methanococcus jannaschii).